A 3637-amino-acid polypeptide reads, in one-letter code: Replicase polyprotein 1ab (3637 aa).

The segment at Cys-8 to Cys-28 adopts a C4-type; atypical zinc-finger fold. A Peptidase C31 domain is found at Glu-69–Arg-181. The segment at Glu-69 to Asn-183 is PCP1-alpha. Residues Cys-76 and His-147 each act as for Nsp1-alpha papain-like cysteine proteinase activity in the active site. The interval Arg-262–Tyr-380 is PCP1-beta. Residues Arg-262 to Gly-381 form the Peptidase C32 domain. Catalysis depends on for Nsp1-beta papain-like cysteine proteinase activity residues Cys-269 and His-340. Residues Gly-381–Gly-486 enclose the Peptidase C33 domain. Residues Cys-390 and His-456 each act as for Nsp2 cysteine proteinase activity in the active site. 2 disordered regions span residues Cys-676–Lys-743 and Gln-865–Leu-899. The span at Pro-678–Arg-689 shows a compositional bias: basic residues. Basic and acidic residues-rich tracts occupy residues Asp-714 to Lys-727 and Gly-873 to Leu-895. The next 7 membrane-spanning stretches (helical) occupy residues Trp-940–Phe-960, Val-981–Gly-1001, Phe-1083–Leu-1103, Ile-1287–Leu-1307, Ala-1362–Val-1382, Cys-1390–Leu-1410, and Val-1423–Ile-1443. The tract at residues Cys-979–Leu-1103 is HD1. The tract at residues Ile-1287–Trp-1446 is HD2. A Peptidase S32 domain is found at Gly-1511–Glu-1712. Catalysis depends on charge relay system; for 3C-like serine proteinase activity residues His-1549, Asp-1574, and Ser-1626. The next 5 membrane-spanning stretches (helical) occupy residues Asp-1735–Ala-1755, Phe-1761–Phe-1781, Leu-1801–Leu-1821, Cys-1824–Gly-1844, and Glu-1853–Lys-1873. Residues Asp-1735–Phe-1872 are HD3. The 159-residue stretch at Ser-2214 to Gly-2372 folds into the NiRAN domain. The 135-residue stretch at Gly-2611 to Tyr-2745 folds into the RdRp catalytic domain. An AV ZBD domain is found at Lys-2865–Leu-2928. Zn(2+)-binding residues include Cys-2871, Cys-2874, Cys-2884, Cys-2889, His-2892, His-2894, His-2896, His-2898, Cys-2905, His-2907, Cys-2914, and Cys-2917. The region spanning Gln-2985–Leu-3137 is the (+)RNA virus helicase ATP-binding domain. Gly-3013 to Thr-3020 is a binding site for ATP. Positions Ile-3138–Glu-3269 constitute a (+)RNA virus helicase C-terminal domain. Residues Glu-3293–Val-3389 enclose the AV-Nsp11N/CoV-Nsp15M domain. The region spanning Leu-3391–Phe-3513 is the NendoU domain. Residues His-3422, His-3437, and Lys-3466 contribute to the active site.

The protein belongs to the arteriviridae polyprotein family. Specific enzymatic cleavages in vivo by its own proteases yield mature proteins. There are two alternative pathways for processing. Either nsp4-5 is cleaved, which represents the major pathway or the nsp5-6 and nsp6-7 are processed, which represents the minor pathway. The major pathway occurs when nsp2 acts as a cofactor for nsp4.

Its subcellular location is the host membrane. It is found in the host cytoplasm. The protein resides in the host perinuclear region. It carries out the reaction RNA(n) + a ribonucleoside 5'-triphosphate = RNA(n+1) + diphosphate. The catalysed reaction is ATP + H2O = ADP + phosphate + H(+). It catalyses the reaction uridylyl-uridylyl-ribonucleotide-RNA = a 3'-end uridylyl-2',3'-cyclophospho-uridine-RNA + a 5'-end dephospho-ribonucleoside-RNA. Functionally, the replicase polyprotein 1ab is a multifunctional protein: it contains the activities necessary for the transcription of negative stranded RNA, leader RNA, subgenomic mRNAs and progeny virion RNA as well as proteinases responsible for the cleavage of the polyprotein into functional products. The Nsp1 chain is essential for viral subgenomic mRNA synthesis. Its function is as follows. The 3C-like serine proteinase chain is responsible for the majority of cleavages as it cleaves the C-terminus of the polyprotein. In terms of biological role, the helicase chain, which contains a zinc finger structure, displays RNA and DNA duplex-unwinding activities with 5' to 3' polarity. Functionally, plays a role in viral transcription/replication and prevents the simultaneous activation of host cell dsRNA sensors, such as MDA5/IFIH1, OAS, and PKR. Acts by degrading the 5'-polyuridines generated during replication of the poly(A) region of viral genomic and subgenomic RNAs. Catalyzes a two-step reaction in which a 2'3'-cyclic phosphate (2'3'-cP) is first generated by 2'-O transesterification, which is then hydrolyzed to a 3'-phosphate (3'-P). If not degraded, poly(U) RNA would hybridize with poly(A) RNA tails and activate host dsRNA sensors. The sequence is that of Replicase polyprotein 1ab (rep) from Mus musculus domesticus (western European house mouse).